Here is a 321-residue protein sequence, read N- to C-terminus: Peroxidase 28 (321 aa).

The first 21 residues, 1–21 (MKIATFSVLLLLLFIFPVALA), serve as a signal peptide directing secretion. 4 cysteine pairs are disulfide-bonded: Cys-32–Cys-111, Cys-65–Cys-70, Cys-117–Cys-317, and Cys-196–Cys-228. The active-site Proton acceptor is His-63. The Ca(2+) site is built by Asp-64, Val-67, Gly-69, Asp-71, and Ser-73. Substrate is bound at residue Pro-159. A heme b-binding site is contributed by His-189. Residue Thr-190 coordinates Ca(2+). Ca(2+) is bound by residues Asp-238, Thr-244, and Asp-249.

The protein belongs to the peroxidase family. Classical plant (class III) peroxidase subfamily. Heme b serves as cofactor. Ca(2+) is required as a cofactor.

It localises to the secreted. The enzyme catalyses 2 a phenolic donor + H2O2 = 2 a phenolic radical donor + 2 H2O. Functionally, removal of H(2)O(2), oxidation of toxic reductants, biosynthesis and degradation of lignin, suberization, auxin catabolism, response to environmental stresses such as wounding, pathogen attack and oxidative stress. These functions might be dependent on each isozyme/isoform in each plant tissue. The sequence is that of Peroxidase 28 (PER28) from Arabidopsis thaliana (Mouse-ear cress).